The chain runs to 1575 residues: MKAQGETEDSERLSKMSSLLERLHAKFNQNRPWSETIKLVRQVMEKRVVMSSGGHQHLVSCLETLQKALKVTSLPAMTDRLESIARQNGLGSHLSASGTECYITSDMFYVEVQLDPAGQLCDVKVAHHGENPVSCPELVQQLREKNFEEFSKHLKGLVNLYNLPGDNKLKTKMYLALQSLEQDLSKMAIMYWKATNAAPLDKILHGSVGYLTPRSGGHLMNMKYYASPSDLLDDKTASPIILHEKNVPRSLGMNASVTIEGTSAMYKLPIAPLIMGSHPADNKWTPSFSAVTSANSVDLPACFFLKFPQPIPVSKAFVQKLQNCTGIPLFETPPTYLPLYELITQFELSKDPDPLPLNHNMRFYAALPGQQHCYFLNKDAPLPDGQSLQGTLVSKITFQHPGRVPLILNMIRHQVAYNTLIGSCVKRTILKEDSPGLLQFEVCPLSESRFSVSFQHPVNDSLVCVVMDVQDSTHVSCKLYKGLSDALICTDDFIAKVVQRCMSIPVTMRAIRRKAETIQADTPALSLIAETVEDMVKKNLPPASSPGYGMTTGNNPMSGTTTPTNTFPGGPITTLFNMSMSIKDRHESVGHGEDFSKVSQNPILTSLLQITGNGGSTIGSSPTPPHHTPPPVSSMAGNTKNHPMLMNLLKDNPAQDFSTLYGSSPLERQNSSSGSPRMEMCSGSNKAKKKKSSRVPPDKPKHQTEDDFQRELFSMDVDSQNPMFDVSMTADALDTPHITPAPSQCSTPPATYPQPVSHPQPSIQRMVRLSSSDSIGPDVTDILSDIAEEASKLPSTSDDCPPIGTPVRDSSSSGHSQSALFDSDVFQTNNNENPYTDPADLIADAAGSPNSDSPTNHFFPDGVDFNPDLLNSQSQSGFGEEYFDESSQSGDNDDFKGFASQALNTLGMPMLGGDNGEPKFKGSSQADTVDFSIISVAGKALGAADLMEHHSGSQSPLLTTGELGKEKTQKRVKEGNGTGASSGSGPGSDSKPGKRSRTPSNDGKSKDKPPKRKKADTEGKSPSHSSSNRPFTPPTSTGGSKSPGSSGRSQTPPGVATPPIPKITIQIPKGTVMVGKPSSHSQYTSSGSVSSSGSKSHHSHSSSSSSLASASTSGKVKSSKSEGSSSSKLSGSMYASQGSSGSSQSKNSSQTGGKPGSSPITKHGLSSGSSSTKMKPQGKPSSLMNPSISKPNISPSHSRPPGGSDKLASPMKPVPGTPPSSKAKSPISSGSSGSHVSGTSSSSGMKSSSGSASSGSVSQKTPPASNSCTPSSSSFSSSGSSMSSSQNQHGSSKGKSPSRNKKPSLTAVIDKLKHGVVTSGPGGEDPIDSQMGASTNSSNHPMSSKHNTSGGEFQSKREKSDKDKSKVSASGGSVDSSKKTSESKNVGSTGVAKIIISKHDGGSPSIKAKVTLQKPGESGGDGLRPQIASSKNYGSPLISGSTPKHERGSPSHSKSPAYTPQNVDSESESGSSIAERSYQNSPSSEDGIRPLPEYSTEKHKKHKKEKKKVRDKDRDKKKSHSMKPENWSKSPISSDPTASVTNNPILSADRPSRLSPDFMIGEEDDDLMDVALIGN.

Residues 1–670 form an interaction with the Mediator complex and THRA region; the sequence is MKAQGETEDS…YGSSPLERQN (670 aa). The tract at residues 16-590 is interaction with ESR1; sequence MSSLLERLHA…SIKDRHESVG (575 aa). Interaction with the Mediator complex stretches follow at residues 108–212 and 215–390; these read FYVE…GYLT and SGGH…SLQG. The interval 405 to 644 is interaction with THRA; it reads PLILNMIRHQ…MAGNTKNHPM (240 aa). Positions 542-789 are interaction with VDR; it reads PASSPGYGMT…TDILSDIAEE (248 aa). At Ser-588 the chain carries Phosphoserine. Positions 604–608 match the LXXLL motif 1 motif; the sequence is LTSLL. Disordered stretches follow at residues 609–706, 737–760, 791–818, 874–895, and 951–1564; these read QITG…QTED, HITP…SHPQ, SKLP…HSQS, SQSG…NDDF, and SGSQ…GEED. Over residues 622–632 the composition is skewed to pro residues; sequence PTPPHHTPPPV. Positions 622 to 701 are interaction with GATA1; that stretch reads PTPPHHTPPP…SSRVPPDKPK (80 aa). The segment at 622 to 701 is interaction with PPARGC1A and THRA; it reads PTPPHHTPPP…SSRVPPDKPK (80 aa). The LXXLL motif 2 signature appears at 645-649; sequence LMNLL. Polar residues predominate over residues 655–675; that stretch reads QDFSTLYGSSPLERQNSSSGS. The interval 656 to 1066 is interaction with ESR1; the sequence is DFSTLYGSSP…TPPIPKITIQ (411 aa). Ser-664 bears the Phosphoserine mark. Residues 696–706 are compositionally biased toward basic and acidic residues; that stretch reads PPDKPKHQTED. Position 795 is a phosphoserine (Ser-795). Thr-805 is subject to Phosphothreonine. A compositionally biased stretch (polar residues) spans 808–818; that stretch reads RDSSSSGHSQS. The Integrase domain-binding motif (IBM) motif lies at 875–902; the sequence is QSGFGEEYFDESSQSGDNDDFKGFASQA. Ser-887, Ser-953, and Ser-955 each carry phosphoserine. Over residues 963 to 974 the composition is skewed to basic and acidic residues; the sequence is LGKEKTQKRVKE. The span at 976 to 986 shows a compositional bias: gly residues; sequence NGTGASSGSGP. Thr-1032 carries the post-translational modification Phosphothreonine; by MAPK1 or MAPK3. Low complexity predominate over residues 1034–1051; sequence PTSTGGSKSPGSSGRSQT. Residues Thr-1051 and Thr-1057 each carry the phosphothreonine modification. Low complexity-rich tracts occupy residues 1078-1094 and 1101-1152; these read SSHS…SSGS and SSSS…SQTG. Ser-1158 is modified (phosphoserine). The segment covering 1158-1184 has biased composition (polar residues); sequence SPITKHGLSSGSSSTKMKPQGKPSSLM. Lys-1179 carries the N6-acetyllysine modification. The span at 1185–1197 shows a compositional bias: low complexity; sequence NPSISKPNISPSH. At Ser-1209 the chain carries Phosphoserine. Thr-1217 is modified (phosphothreonine). 2 stretches are compositionally biased toward low complexity: residues 1220 to 1258 and 1265 to 1295; these read SSKA…GSVS and SNSC…SKGK. At Ser-1225 the chain carries Phosphoserine. The segment at 1251–1423 is interaction with TP53; it reads SASSGSVSQK…KPGESGGDGL (173 aa). Ser-1304 and Ser-1349 each carry phosphoserine. A compositionally biased stretch (polar residues) spans 1331-1352; the sequence is MGASTNSSNHPMSSKHNTSGGE. A compositionally biased stretch (basic and acidic residues) spans 1354–1366; the sequence is QSKREKSDKDKSK. Phosphoserine is present on residues Ser-1405 and Ser-1435. 2 stretches are compositionally biased toward polar residues: residues 1427–1442 and 1450–1484; these read IASS…SGST and PSHS…SPSS. Thr-1442 carries the post-translational modification Phosphothreonine. At Thr-1459 the chain carries Phosphothreonine; by MAPK1 or MAPK3. A phosphoserine mark is found at Ser-1465, Ser-1467, Ser-1481, Ser-1483, and Ser-1484. The span at 1498–1507 shows a compositional bias: basic residues; that stretch reads KHKKHKKEKK. Lys-1523 is modified (N6-acetyllysine). Over residues 1527 to 1545 the composition is skewed to polar residues; that stretch reads WSKSPISSDPTASVTNNPI.

It belongs to the Mediator complex subunit 1 family. In terms of assembly, component of the Mediator complex, which is composed of MED1, MED4, MED6, MED7, MED8, MED9, MED10, MED11, MED12, MED13, MED13L, MED14, MED15, MED16, MED17, MED18, MED19, MED20, MED21, MED22, MED23, MED24, MED25, MED26, MED27, MED29, MED30, MED31, CCNC, CDK8 and CDC2L6/CDK11. The MED12, MED13, CCNC and CDK8 subunits form a distinct module termed the CDK8 module. Mediator containing the CDK8 module is less active than Mediator lacking this module in supporting transcriptional activation. Individual preparations of the Mediator complex lacking one or more distinct subunits have been variously termed ARC, CRSP, DRIP, PC2, SMCC and TRAP. This subunit specifically interacts with a number of nuclear receptors in a ligand-dependent fashion including AR, ESR1, ESR2, PPARA, PPARG, RORA, RXRA, RXRG, THRA, THRB and VDR. Interacts with CTNNB1, GABPA, GLI3, PPARGC1A and TP53. Interacts with GATA1 and YWHAH. Interacts with CLOCK; this interaction requires the presence of THRAP3. Interacts with CCAR1. Interacts with NR4A3. Interacts (via IBM motif) with PSIP1 (via IBD domain); phosphorylation increases its affinity for PSIP1. Interacts with USP22. In terms of processing, phosphorylated by MAPK1 or MAPK3 during G2/M phase which may enhance protein stability and promote entry into the nucleolus. Phosphorylation increases its interaction with PSIP1. As to expression, widely expressed in the adult, with high levels of expression in the liver, lung, intestinal mucosa, kidney cortex, thymic cortex, splenic follicle and seminiferous epithelium in testis. Also expressed in the adult heart, brain, spleen and skeletal muscle.

It is found in the nucleus. In terms of biological role, component of the Mediator complex, a coactivator involved in the regulated transcription of nearly all RNA polymerase II-dependent genes. Mediator functions as a bridge to convey information from gene-specific regulatory proteins to the basal RNA polymerase II transcription machinery. Mediator is recruited to promoters by direct interactions with regulatory proteins and serves as a scaffold for the assembly of a functional preinitiation complex with RNA polymerase II and the general transcription factors. Essential for embryogenesis, including development of the central nervous system, heart, liver and placenta and for erythropoiesis. Also required for normal transcriptional control of thyroid-stimulating hormone beta (TSHB) in the pituitary. Acts as a coactivator for GATA1-mediated transcriptional activation during erythroid differentiation of K562 erythroleukemia cells. The polypeptide is Mediator of RNA polymerase II transcription subunit 1 (Med1) (Mus musculus (Mouse)).